A 175-amino-acid chain; its full sequence is Disulfide bond formation protein B (175 aa).

The Cytoplasmic portion of the chain corresponds to Met1–Ser13. Residues Trp14–Tyr30 form a helical membrane-spanning segment. The Periplasmic portion of the chain corresponds to Phe31–Leu48. Cys40 and Cys43 are disulfide-bonded. Residues Ala49–Pro64 form a helical membrane-spanning segment. Topologically, residues Lys65–Ile71 are cytoplasmic. Residues Leu72–Leu89 form a helical membrane-spanning segment. At Ala90 to Glu144 the chain is on the periplasmic side. Cys104 and Cys130 are disulfide-bonded. A helical membrane pass occupies residues Trp145–Pro163. The Cytoplasmic portion of the chain corresponds to Ile164–Lys175.

This sequence belongs to the DsbB family.

The protein localises to the cell inner membrane. Its function is as follows. Required for disulfide bond formation in some periplasmic proteins. Acts by oxidizing the DsbA protein. The sequence is that of Disulfide bond formation protein B from Shewanella sp. (strain W3-18-1).